The primary structure comprises 656 residues: Tetratricopeptide repeat protein 30 homolog (656 aa).

TPR repeat units follow at residues 9–42 (EGEFTSTIYTLIHEHKFNDAIRILQYQHERNPKN), 43–76 (LAALSLLAYCYYYTQDFMNAADCYSQLSYNFPQY), 141–174 (AAVIINTACIDYKEGNYEEALKKFNEATEFSGYQ), 176–208 (GLAYSIALCHYRRGDYDSALKLISEIINRGVKD), 238–271 (IEAFNLKFAIYYRTKDFKAAKESLTDMPPRNEHD), 378–412 (RKTAIEIQIKKEQKTTDSDDSLEMRNLIESYDDSL), 416–449 (LPVLMTYAKYYWDKRDYQAVEKLFRNSVDYCKEH), 451–484 (TWKLNVAHTIFMQEKKYKDAAAFYEPIVHKKYDD), and 537–570 (SIISLVIGSLYCSKGNFEFGISRVVKALEPPEKK).

Belongs to the TTC30/dfy-1/fleer family. As to quaternary structure, component of the IFT complex B composed of at least che-2, che-13, dyf-1, dyf-3, dyf-6, dyf-11, dyf-13, ift-20, ift-74, ift-81, ifta-2, osm-1, osm-5 and osm-6. As to expression, expressed in most amphid, both phasmid and several labial-quadrant neurons.

It localises to the cell projection. It is found in the cilium. Plays a role in anterograde intraflagellar transport (IFT), the process by which cilia precursors are transported from the base of the cilium to the site of their incorporation at the tip. Specifically required for the kinesin osm-3 to dock onto and move the IFT particles which contain these precursors. Component of the intraflagellar transport (IFT) complex B required for transport of proteins in the motile cilium. May be required for ciliary entrance and transport of specific ciliary cargo proteins such as che-3 which are related to motility. Required for polyglutamylation of axonemal tubulin in sensory cilia. The protein is Tetratricopeptide repeat protein 30 homolog of Caenorhabditis elegans.